We begin with the raw amino-acid sequence, 165 residues long: Large ribosomal subunit protein uL11 (165 aa).

This sequence belongs to the universal ribosomal protein uL11 family. In terms of assembly, component of the large ribosomal subunit. Mature ribosomes consist of a small (40S) and a large (60S) subunit. The 40S subunit contains about 32 different proteins and 1 molecule of RNA (18S). The 60S subunit contains 45 different proteins and 3 molecules of RNA (25S, 5.8S and 5S).

The protein resides in the cytoplasm. Its function is as follows. Component of the ribosome, a large ribonucleoprotein complex responsible for the synthesis of proteins in the cell. The small ribosomal subunit (SSU) binds messenger RNAs (mRNAs) and translates the encoded message by selecting cognate aminoacyl-transfer RNA (tRNA) molecules. The large subunit (LSU) contains the ribosomal catalytic site termed the peptidyl transferase center (PTC), which catalyzes the formation of peptide bonds, thereby polymerizing the amino acids delivered by tRNAs into a polypeptide chain. The nascent polypeptides leave the ribosome through a tunnel in the LSU and interact with protein factors that function in enzymatic processing, targeting, and the membrane insertion of nascent chains at the exit of the ribosomal tunnel. In Candida albicans (strain SC5314 / ATCC MYA-2876) (Yeast), this protein is Large ribosomal subunit protein uL11 (RPL12).